The sequence spans 134 residues: Large ribosomal subunit protein uL16c (134 aa).

This sequence belongs to the universal ribosomal protein uL16 family. Part of the 50S ribosomal subunit.

It localises to the plastid. Its subcellular location is the chloroplast. This is Large ribosomal subunit protein uL16c from Solanum lycopersicum (Tomato).